The sequence spans 363 residues: S-methylmethionine--homocysteine S-methyltransferase BHMT2 (363 aa).

Residues 11–305 (KGILERLDSG…YHIRAIAEEL (295 aa)) enclose the Hcy-binding domain. Zn(2+) contacts are provided by cysteine 208, cysteine 290, and cysteine 291. The residue at position 321 (serine 321) is a Phosphoserine.

Homotetramer. Zn(2+) serves as cofactor. In terms of tissue distribution, expressed in fetal heart, lung, liver, kidney and eye.

It carries out the reaction S-methyl-L-methionine + L-homocysteine = 2 L-methionine + H(+). Its pathway is amino-acid biosynthesis; L-methionine biosynthesis via de novo pathway; L-methionine from L-homocysteine (BhmT route): step 1/1. Functionally, involved in the regulation of homocysteine metabolism. Converts homocysteine to methionine using S-methylmethionine (SMM) as a methyl donor. The chain is S-methylmethionine--homocysteine S-methyltransferase BHMT2 (Bhmt2) from Mus musculus (Mouse).